The sequence spans 206 residues: Uridine kinase (206 aa).

11–18 lines the ATP pocket; the sequence is GGTGSGKS.

The protein belongs to the uridine kinase family.

It localises to the cytoplasm. The catalysed reaction is uridine + ATP = UMP + ADP + H(+). It catalyses the reaction cytidine + ATP = CMP + ADP + H(+). It functions in the pathway pyrimidine metabolism; CTP biosynthesis via salvage pathway; CTP from cytidine: step 1/3. The protein operates within pyrimidine metabolism; UMP biosynthesis via salvage pathway; UMP from uridine: step 1/1. This Clostridium botulinum (strain Langeland / NCTC 10281 / Type F) protein is Uridine kinase.